Consider the following 486-residue polypeptide: LON peptidase N-terminal domain and RING finger protein C14F5.10c (486 aa).

The RING-type zinc-finger motif lies at 169 to 207; sequence CQICFGMLYDPVVSPCGHTFCGPCLMQALTQSPQCPTCR. The 223-residue stretch at 250-472 folds into the Lon N-terminal domain; sequence ESWLPLFISM…LVLIWLTQLQ (223 aa).

This chain is LON peptidase N-terminal domain and RING finger protein C14F5.10c, found in Schizosaccharomyces pombe (strain 972 / ATCC 24843) (Fission yeast).